The following is a 783-amino-acid chain: Polyadenylate-binding protein, cytoplasmic and nuclear (783 aa).

Residues 16-65 are disordered; sequence DLGNTSLGGGDNRAAPAINTNVAPGEYQTADPDTAGPTPSSAAPHPQSSA. The segment covering 54-65 has biased composition (low complexity); the sequence is PSSAAPHPQSSA. 4 RRM domains span residues 65–143, 153–230, 246–323, and 349–471; these read ASLY…WSQR, GNVF…YHIP, TNIY…RAQK, and VNLY…LAQR. 3 disordered regions span residues 381–428, 596–671, and 752–783; these read MRDA…KGDR, AAAL…AAGG, and VKSQ…EEKA. Residues 396 to 406 are compositionally biased toward basic and acidic residues; the sequence is GKDKENKKEGE. Over residues 407–416 the composition is skewed to acidic residues; that stretch reads QAAEAEGEAE. The span at 417-428 shows a compositional bias: basic and acidic residues; sequence GAEKKTEKKGDR. Over residues 601–614 the composition is skewed to gly residues; that stretch reads NGRGGPGGPGGRGM. Positions 630–641 are enriched in low complexity; the sequence is AGFPPNGRPQNG. The span at 642 to 655 shows a compositional bias: gly residues; the sequence is NMGGRGGPGRGGNF. A compositionally biased stretch (low complexity) spans 656-671; that stretch reads AAGRGAPPAGPLAAGG. One can recognise a PABC domain in the interval 676–753; that stretch reads SSLLQSQLTA…AMAVYDEYVK (78 aa). The span at 770–783 shows a compositional bias: basic and acidic residues; it reads EAEKPKEEKAEEKA.

It belongs to the polyadenylate-binding protein type-1 family.

It is found in the cytoplasm. The protein localises to the nucleus. In terms of biological role, binds the poly(A) tail of mRNA. Appears to be an important mediator of the multiple roles of the poly(A) tail in mRNA biogenesis, stability and translation. In the nucleus, involved in both mRNA cleavage and polyadenylation. Is also required for efficient mRNA export to the cytoplasm. Acts in concert with a poly(A)-specific nuclease (PAN) to affect poly(A) tail shortening, which may occur concomitantly with either nucleocytoplasmic mRNA transport or translational initiation. In the cytoplasm, stimulates translation initiation and regulates mRNA decay through translation termination-coupled poly(A) shortening, probably mediated by PAN. This is Polyadenylate-binding protein, cytoplasmic and nuclear (PAB1) from Chaetomium globosum (strain ATCC 6205 / CBS 148.51 / DSM 1962 / NBRC 6347 / NRRL 1970) (Soil fungus).